Here is a 61-residue protein sequence, read N- to C-terminus: Large ribosomal subunit protein bL32 (61 aa).

The interval 1-44 is disordered; that stretch reads MAVQQNRKSRSRRDMRRSHDALTENALTVDQATGETHRRHHVTK. Residues 7 to 16 are compositionally biased toward basic residues; the sequence is RKSRSRRDMR. Positions 25 to 34 are enriched in polar residues; sequence NALTVDQATG.

This sequence belongs to the bacterial ribosomal protein bL32 family.

The protein is Large ribosomal subunit protein bL32 of Acinetobacter baumannii (strain AB307-0294).